The primary structure comprises 241 residues: Protein unc-119 homolog B-B (241 aa).

The disordered stretch occupies residues 1-46; sequence MSGSNREAALAGQPKDERKKSGGGVINRLKARRVQGKESGTSDQSS. Tyr-132 contributes to the tetradecanoate binding site.

The protein belongs to the PDE6D/unc-119 family.

Its subcellular location is the cell projection. The protein resides in the cilium. Myristoyl-binding protein that acts as a cargo adapter: specifically binds the myristoyl moiety of a subset of N-terminally myristoylated proteins and is required for their localization. Plays a key role in localization of proteins to the primary cilium membrane. This Xenopus laevis (African clawed frog) protein is Protein unc-119 homolog B-B (unc119b-b).